The chain runs to 320 residues: 3'-5' exoribonuclease YhaM (320 aa).

The segment at residues 18–90 (FLIKSATKAV…QLKIGSIRPT (73 aa)) is a DNA-binding region (OB). One can recognise an HD domain in the interval 163 to 279 (HVVCMLNVAK…LHMIDNIDAK (117 aa)).

This sequence belongs to the YhaM family.

Shows a 3'-5' exoribonuclease activity. This is 3'-5' exoribonuclease YhaM from Halalkalibacterium halodurans (strain ATCC BAA-125 / DSM 18197 / FERM 7344 / JCM 9153 / C-125) (Bacillus halodurans).